Consider the following 402-residue polypeptide: Imidazolonepropionase (402 aa).

Residues histidine 66 and histidine 68 each contribute to the Fe(3+) site. Residues histidine 66 and histidine 68 each contribute to the Zn(2+) site. Residues arginine 75, tyrosine 138, and histidine 171 each coordinate 4-imidazolone-5-propanoate. Tyrosine 138 contacts N-formimidoyl-L-glutamate. Histidine 236 is a Fe(3+) binding site. Histidine 236 lines the Zn(2+) pocket. Position 239 (glutamine 239) interacts with 4-imidazolone-5-propanoate. Residue aspartate 311 participates in Fe(3+) binding. Zn(2+) is bound at residue aspartate 311. N-formimidoyl-L-glutamate is bound by residues asparagine 313 and glycine 315. Position 316 (threonine 316) interacts with 4-imidazolone-5-propanoate.

This sequence belongs to the metallo-dependent hydrolases superfamily. HutI family. Zn(2+) is required as a cofactor. The cofactor is Fe(3+).

Its subcellular location is the cytoplasm. The enzyme catalyses 4-imidazolone-5-propanoate + H2O = N-formimidoyl-L-glutamate. It functions in the pathway amino-acid degradation; L-histidine degradation into L-glutamate; N-formimidoyl-L-glutamate from L-histidine: step 3/3. Its function is as follows. Catalyzes the hydrolytic cleavage of the carbon-nitrogen bond in imidazolone-5-propanoate to yield N-formimidoyl-L-glutamate. It is the third step in the universal histidine degradation pathway. This chain is Imidazolonepropionase, found in Pseudomonas aeruginosa (strain LESB58).